A 1438-amino-acid polypeptide reads, in one-letter code: Pyochelin synthetase PchE (1438 aa).

The 80-residue stretch at Asp-6–Asp-85 folds into the Carrier 1 domain. Residue Ser-46 is modified to O-(pantetheine 4'-phosphoryl)serine. The tract at residues Arg-136–Ala-442 is condensation/cyclization. Residues Arg-563 to Arg-950 form an adenylation region. One can recognise a Carrier 2 domain in the interval Glu-1350–Thr-1425. Ser-1385 bears the O-(pantetheine 4'-phosphoryl)serine mark.

It belongs to the NRP synthetase family. It depends on pantetheine 4'-phosphate as a cofactor.

The enzyme catalyses holo-[peptidyl-carrier protein] + L-cysteine + ATP = L-cysteinyl-[peptidyl-carrier protein] + AMP + diphosphate. It participates in siderophore biosynthesis. The protein operates within antifungal biosynthesis. Its function is as follows. Involved in the biosynthesis of the siderophore pyochelin. Accepts salicylate activated by PchD at the first peptidyl carrier domain (ArCP), and activates and fixes one molecule of cysteine at the second peptidyl carrier domain (PCP1) via a thioester linkage to the phosphopanthetheine moiety. Then catalyzes the condensation reaction between the salicylate bound to the first site and the cysteine bound to the second site, and the cyclization of the cysteine to form the salicyl-thiazolinyl-S-PCP1 intermediate at the second site. When this intermediate is released by the action of a thioesterase, it produces the antifungal antibiotic dihydroaeruginoic acid (Dha or hydroxyphenyl-thiazolinyl-carboxylate). In Pseudomonas aeruginosa (strain ATCC 15692 / DSM 22644 / CIP 104116 / JCM 14847 / LMG 12228 / 1C / PRS 101 / PAO1), this protein is Pyochelin synthetase PchE.